Here is a 196-residue protein sequence, read N- to C-terminus: Large ribosomal subunit protein bL17 (196 aa).

Residues Ala133 to Lys196 are disordered. A compositionally biased stretch (basic and acidic residues) spans Ala134–Ala143. Over residues Glu152–Ala164 the composition is skewed to acidic residues. Residues Ala184–Lys196 are compositionally biased toward basic and acidic residues.

The protein belongs to the bacterial ribosomal protein bL17 family. As to quaternary structure, part of the 50S ribosomal subunit. Contacts protein L32.

The sequence is that of Large ribosomal subunit protein bL17 from Arthrobacter sp. (strain FB24).